Here is a 532-residue protein sequence, read N- to C-terminus: Sodium-dependent lysophosphatidylcholine symporter 1-A (532 aa).

Over 1–40 (MARGEGAEQFSSGLLPTAKSVTQNEIKMVKLPKQQERKRA) the chain is Cytoplasmic. Residues 41–70 (LTVWSKVCFAIGGAPYQITGTALGFFLQIF) form a helical membrane-spanning segment. The Extracellular segment spans residues 71-81 (LLDVAQLNPLN). A helical transmembrane segment spans residues 82-102 (ASVILFVGRAWDAVTDPTVGF). The Cytoplasmic segment spans residues 103 to 114 (LVSRTPWTRHGR). A helical transmembrane segment spans residues 115-134 (MMPWILVSTIPAVLCYFLIW). Topologically, residues 135–144 (VVPPIEQGKM) are extracellular. A helical membrane pass occupies residues 145-169 (MWYLLFYCLFQTLQTCFHVPYSALT). At 170-176 (MFISTEQ) the chain is on the cytoplasmic side. Residues 177 to 208 (RERDSATAYRMTVEVFGTVVGTAIQGQIVGMA) traverse the membrane as a helical segment. Topologically, residues 209–232 (NTPCKNNTSPNNSSNDLIQSNNSH) are extracellular. An intrachain disulfide couples C212 to C464. N214, N220, and N229 each carry an N-linked (GlcNAc...) asparagine glycan. The helical transmembrane segment at 233 to 266 (IPLKSNIFDERCAYMIASAVISLIYVVCAAVLFF) threads the bilayer. The Cytoplasmic segment spans residues 267 to 297 (GVREQDVQGELKAQKRVSFQKGLRLVMGHGP). A helical transmembrane segment spans residues 298–324 (YVKLVLAFLFTSLAFMLLEGNFAVFIK). The Extracellular portion of the chain corresponds to 325 to 335 (YTLGFREDFQN). Residues 336 to 354 (ILLVIMVSATVSIPMWQWF) form a helical membrane-spanning segment. Over 355–358 (LCRF) the chain is Cytoplasmic. A helical membrane pass occupies residues 359-380 (GKKTAVYIGITWAVPFMILVVS). Topologically, residues 381–383 (VNS) are extracellular. Residues 384–420 (SLIVSYIVSIAAGVSVGAAFLLPWSMLPDVVDDFKLQ) form a helical membrane-spanning segment. Residues 421-430 (NPTSQGHEAI) lie on the Cytoplasmic side of the membrane. Residues 431 to 457 (FYSFYVFFTKFASGVSLGVSTLALSFA) traverse the membrane as a helical segment. The Extracellular portion of the chain corresponds to 458–469 (GYETGVCVQSDS). Residues 470-493 (VNLTLKLLVSAAPVSLIALGLLIF) traverse the membrane as a helical segment. Over 494–532 (MTYPIDEERREYNNKQLQLLLRNEEEEDEMEVLKPDITA) the chain is Cytoplasmic.

This sequence belongs to the major facilitator superfamily. As to expression, expressed in the developing nervous system.

It is found in the cell membrane. It localises to the endoplasmic reticulum membrane. The enzyme catalyses a 1-acyl-sn-glycero-3-phosphocholine(in) + Na(+)(in) = a 1-acyl-sn-glycero-3-phosphocholine(out) + Na(+)(out). It catalyses the reaction 1-(4Z,7Z,10Z,13Z,16Z,19Z-docosahexaenoyl)-sn-glycero-3-phosphocholine(in) + Na(+)(in) = 1-(4Z,7Z,10Z,13Z,16Z,19Z-docosahexaenoyl)-sn-glycero-3-phosphocholine(out) + Na(+)(out). The catalysed reaction is 1-(9Z-octadecenoyl)-sn-glycero-3-phosphocholine(in) + Na(+)(in) = 1-(9Z-octadecenoyl)-sn-glycero-3-phosphocholine(out) + Na(+)(out). It carries out the reaction 1-hexadecanoyl-sn-glycero-3-phosphocholine(in) + Na(+)(in) = 1-hexadecanoyl-sn-glycero-3-phosphocholine(out) + Na(+)(out). The enzyme catalyses a 1-acyl-sn-glycero-3-phosphoethanolamine(in) + Na(+)(in) = a 1-acyl-sn-glycero-3-phosphoethanolamine(out) + Na(+)(out). Its function is as follows. Sodium-dependent lysophosphatidylcholine (LPC) symporter, which plays an essential role for blood-brain barrier formation and function. Specifically expressed in endothelium of the blood-brain barrier of micro-vessels and transports LPC into the brain. Transport of LPC is essential because it constitutes the major mechanism by which docosahexaenoic acid (DHA), an omega-3 fatty acid that is essential for normal brain growth and cognitive function, enters the brain. Transports LPC carrying long-chain fatty acids such LPC oleate and LPC palmitate with a minimum acyl chain length of 14 carbons. Does not transport docosahexaenoic acid in unesterified fatty acid. This is Sodium-dependent lysophosphatidylcholine symporter 1-A (mfsd2aa) from Danio rerio (Zebrafish).